The primary structure comprises 465 residues: Intraflagellar transport protein 54 (465 aa).

2 disordered regions span residues 119–301 and 347–366; these read VRSN…GFTM and LHGD…DKKP. Residues 144–207 adopt a coiled-coil conformation; it reads LEALAREKAE…KQKQQQQQQQ (64 aa). Over residues 146–198 the composition is skewed to basic and acidic residues; it reads ALAREKAEKERQRREQEQQERERKERERQEKEREEREKHELESRERAEAEQWK. The span at 199-220 shows a compositional bias: low complexity; it reads QKQQQQQQQQQSAISPQKSPPK. Residues 222–242 show a composition bias toward basic and acidic residues; sequence RFADDDKTRVEEHQPVIERPH.

This sequence belongs to the TRAF3IP1 family.

It is found in the cell projection. Its subcellular location is the cilium. The protein resides in the flagellum. The protein localises to the cytoplasm. It localises to the cytoskeleton. It is found in the flagellum axoneme. Its subcellular location is the flagellum basal body. Functionally, component of the intraflagellar transport complex B (IFT-B) involved in flagellar assembly. This is Intraflagellar transport protein 54 from Giardia intestinalis (strain ATCC 50803 / WB clone C6) (Giardia lamblia).